We begin with the raw amino-acid sequence, 622 residues long: DNA polymerase II small subunit (622 aa).

Positions 76–113 (ISTGEGSQKVPDHEELEKITNESSVESSISTGETPKTE) are disordered. Basic and acidic residues predominate over residues 85–95 (VPDHEELEKIT). Positions 96–109 (NESSVESSISTGET) are enriched in polar residues.

Belongs to the DNA polymerase delta/II small subunit family. In terms of assembly, heterodimer of a large subunit and a small subunit.

The catalysed reaction is DNA(n) + a 2'-deoxyribonucleoside 5'-triphosphate = DNA(n+1) + diphosphate. It catalyses the reaction Exonucleolytic cleavage in the 3'- to 5'-direction to yield nucleoside 5'-phosphates.. Possesses two activities: a DNA synthesis (polymerase) and an exonucleolytic activity that degrades single-stranded DNA in the 3' to 5' direction. Has a template-primer preference which is characteristic of a replicative DNA polymerase. The polypeptide is DNA polymerase II small subunit (polB) (Pyrococcus horikoshii (strain ATCC 700860 / DSM 12428 / JCM 9974 / NBRC 100139 / OT-3)).